The following is a 427-amino-acid chain: Glutamate-1-semialdehyde 2,1-aminomutase (427 aa).

Lysine 265 is modified (N6-(pyridoxal phosphate)lysine).

Belongs to the class-III pyridoxal-phosphate-dependent aminotransferase family. HemL subfamily. Homodimer. It depends on pyridoxal 5'-phosphate as a cofactor.

The protein resides in the cytoplasm. The catalysed reaction is (S)-4-amino-5-oxopentanoate = 5-aminolevulinate. It functions in the pathway porphyrin-containing compound metabolism; protoporphyrin-IX biosynthesis; 5-aminolevulinate from L-glutamyl-tRNA(Glu): step 2/2. The protein is Glutamate-1-semialdehyde 2,1-aminomutase of Shewanella amazonensis (strain ATCC BAA-1098 / SB2B).